The primary structure comprises 354 residues: E2F transcription factor-like E2FF (354 aa).

Residues Arg-21 to Gly-86 mediate DNA binding. Residues Glu-104–Asp-143 form a disordered region. Residues Tyr-108–Val-117 are compositionally biased toward polar residues. Residues Lys-145 to Gly-225 mediate DNA binding.

This sequence belongs to the E2F/DP family. As to expression, high expression in young cotyledons and leaves, hypocotyls, shoot apical meristem, roots and mature pollen grains, moderate in developing trichomes, flowers and at early stages of developing anthers, and barely detectable in mature leaves. Not detected in primary root meristem, emerging lateral roots, pistils, developing embryos and siliques.

Its subcellular location is the nucleus. It is found in the cytoplasm. Functionally, inhibitor of E2F-dependent activation of gene expression. Binds specifically the E2 recognition site without interacting with DP proteins and prevents transcription activation by E2F/DP heterodimers. Does not bind retinoblastoma-related proteins. Acts as a growth regulator but is not associated with changes in the expression of cell cycle marker genes or in nuclear ploidy levels. Has no effect on cell proliferation, but may repress cell wall biosynthesis genes during cell elongation in differentiated cells. The sequence is that of E2F transcription factor-like E2FF (E2FF) from Arabidopsis thaliana (Mouse-ear cress).